Consider the following 112-residue polypeptide: Protein new-glue 2 (112 aa).

Positions 1-24 are cleaved as a signal peptide; sequence MKITVVLVLLATFLGCVMIHESEA. Residues 24–69 are compositionally biased toward low complexity; the sequence is ASTTTTSTSASATTTTSASATTTTSASATTTTSASATTTTASPSSS. Residues 24-112 form a disordered region; that stretch reads ASTTTTSTSA…RSSRNRRSEE (89 aa). Tandem repeats lie at residues 31 to 38, 39 to 46, 47 to 54, and 55 to 62. The tract at residues 31–62 is 4 X 8 AA tandem repeats of T-S-A-S-A-T-T-T; that stretch reads TSASATTTTSASATTTTSASATTTTSASATTT. The span at 70–112 shows a compositional bias: basic residues; it reads SKKKTVTHYKRKVKRPKKVRKITRRRGLRSRNGRSSRNRRSEE.

To NG-1, also to SGS-3. As to expression, salivary gland specific.

The protein localises to the secreted. The chain is Protein new-glue 2 (ng2) from Drosophila melanogaster (Fruit fly).